We begin with the raw amino-acid sequence, 121 residues long: MIKPQTYLKIADNTGAQKIMCIRILGPNCQYANIGDIIIAVVKEAIPNMVVKKSDIVKAVIVRTVKGVRRESGMAIRFDENAAVIINNDRSPKGTRIFGPIARELREKEFVKIMSLAPEVV.

The protein belongs to the universal ribosomal protein uL14 family. Part of the 50S ribosomal subunit.

Its subcellular location is the plastid. The protein localises to the chloroplast. Functionally, binds to 23S rRNA. This chain is Large ribosomal subunit protein uL14c, found in Euglena gracilis.